The primary structure comprises 982 residues: MSLPSLANLPATLLPAAERAGTALRSAVAALDAAALARLEAWPEERLEDFRRVAAASDFVAEQAVRDSAMLLELAERGELENPHAPGELRSQLQARLEDCADEDELGRRLRRFRTRQQLRIIWRDLTRRAALAETCRDLSALADACIDLACEWLHRRQCEQFGTPIGRRSGEPQRMVVLGMGKLGAVELNLSSDIDLIFGYPEGGETEGAKRSLDNQEFFTRLGQKLIKALDAITVDGFVFRVDMRLRPYGSSGPLVYSFAALEQYYQDQGRDWERYAMIKARVVGGDQQAGEQLLGMLRPFVYRRYLDFSAIEALRTMKQLIQQEVRRKGMSENIKLGEGGIREVEFIAQAFQLIHGGRDLSLQQRPLLKVLATLEGQGYLPPAVVEELRGGYEFLRYAEHAIQALADRQTQMLPSDEYDRIRVAFIMGFASWAAFHERLSHWRARIDWHFRQVIADPDEDESGEAACGSVGAEWIPLWEEALDEESASRQLADAGFVDAEAAWKRLSDLRHGPQVRAMQRLGRERLDAFVPRLLAMTVENPQPDLVLERVLPLVEAVARRSAYLVLLTENPGALERLLTLCAASPMVAEQIARFPILLDELLNEGRLFRPPQAAELAAELRERLMRIPEDDLEQQMETLRHFKLAHGLRVAASEIAGTLPLMKVSDYLTWLAEAILVEVLELAWRQLVQRHGRPLRADGTPCDPDFVIVGYGKVGGLEFGHGSDLDLVFIHDGDPQCETDGGKSIDGAQFFTRLGQKIIHFLTAQTPSGTLYEVDMRLRPSGAAGLLVSSLGAFQRYQEQEAWTWEHQALVRARVLAGCRRVQASFEAVRAEVLARPRDLDALRTEVSEMRAKMRDNLGTRATAAGTASNAFEATAAFDLKHDAGGIVDIEFMVQYAVLAWSGEHPALLEFTDNIRILEGLERAGLIASEDVRLLQEAYKAYRAAAHRLALQKEAGVVSGEHFQTERREVIRIWRELRLG.

Residues 1-460 (MSLPSLANLP…HFRQVIADPD (460 aa)) form an adenylyl removase region. Residues 473-982 (GAEWIPLWEE…IRIWRELRLG (510 aa)) form an adenylyl transferase region.

It belongs to the GlnE family. Requires Mg(2+) as cofactor.

The catalysed reaction is [glutamine synthetase]-O(4)-(5'-adenylyl)-L-tyrosine + phosphate = [glutamine synthetase]-L-tyrosine + ADP. It catalyses the reaction [glutamine synthetase]-L-tyrosine + ATP = [glutamine synthetase]-O(4)-(5'-adenylyl)-L-tyrosine + diphosphate. Its function is as follows. Involved in the regulation of glutamine synthetase GlnA, a key enzyme in the process to assimilate ammonia. When cellular nitrogen levels are high, the C-terminal adenylyl transferase (AT) inactivates GlnA by covalent transfer of an adenylyl group from ATP to specific tyrosine residue of GlnA, thus reducing its activity. Conversely, when nitrogen levels are low, the N-terminal adenylyl removase (AR) activates GlnA by removing the adenylyl group by phosphorolysis, increasing its activity. The regulatory region of GlnE binds the signal transduction protein PII (GlnB) which indicates the nitrogen status of the cell. This is Bifunctional glutamine synthetase adenylyltransferase/adenylyl-removing enzyme from Pseudomonas aeruginosa (strain ATCC 15692 / DSM 22644 / CIP 104116 / JCM 14847 / LMG 12228 / 1C / PRS 101 / PAO1).